Consider the following 258-residue polypeptide: Imidazole glycerol phosphate synthase subunit HisF (258 aa).

Catalysis depends on residues Asp11 and Asp130.

This sequence belongs to the HisA/HisF family. Heterodimer of HisH and HisF.

The protein localises to the cytoplasm. It catalyses the reaction 5-[(5-phospho-1-deoxy-D-ribulos-1-ylimino)methylamino]-1-(5-phospho-beta-D-ribosyl)imidazole-4-carboxamide + L-glutamine = D-erythro-1-(imidazol-4-yl)glycerol 3-phosphate + 5-amino-1-(5-phospho-beta-D-ribosyl)imidazole-4-carboxamide + L-glutamate + H(+). Its pathway is amino-acid biosynthesis; L-histidine biosynthesis; L-histidine from 5-phospho-alpha-D-ribose 1-diphosphate: step 5/9. Its function is as follows. IGPS catalyzes the conversion of PRFAR and glutamine to IGP, AICAR and glutamate. The HisF subunit catalyzes the cyclization activity that produces IGP and AICAR from PRFAR using the ammonia provided by the HisH subunit. This chain is Imidazole glycerol phosphate synthase subunit HisF, found in Bradyrhizobium sp. (strain ORS 278).